The following is a 574-amino-acid chain: uncharacterized protein (574 aa).

Residues Ser297–Ser327 are disordered. Polar residues predominate over residues Ala313–Ser327.

This is an uncharacterized protein from Macaca fascicularis (Crab-eating macaque).